Reading from the N-terminus, the 242-residue chain is Ubiquinone biosynthesis O-methyltransferase (242 aa).

Residues R44, G64, D85, and M129 each coordinate S-adenosyl-L-methionine.

Belongs to the methyltransferase superfamily. UbiG/COQ3 family.

The enzyme catalyses a 3-demethylubiquinol + S-adenosyl-L-methionine = a ubiquinol + S-adenosyl-L-homocysteine + H(+). It carries out the reaction a 3-(all-trans-polyprenyl)benzene-1,2-diol + S-adenosyl-L-methionine = a 2-methoxy-6-(all-trans-polyprenyl)phenol + S-adenosyl-L-homocysteine + H(+). It participates in cofactor biosynthesis; ubiquinone biosynthesis. O-methyltransferase that catalyzes the 2 O-methylation steps in the ubiquinone biosynthetic pathway. The chain is Ubiquinone biosynthesis O-methyltransferase from Salmonella choleraesuis (strain SC-B67).